A 468-amino-acid polypeptide reads, in one-letter code: Pentatricopeptide repeat-containing protein At5g46680 (468 aa).

12 PPR repeats span residues 12–46, 47–81, 82–116, 117–152, 153–183, 187–221, 222–256, 257–291, 293–327, 328–362, 363–393, and 394–428; these read STKLLNISVNSLCKFRNLERAETLLIDGIRLGVLP, DVITYNTLIKGYTRFIGIDEAYAVTRRMREAGIEP, DVTTYNSLISGAAKNLMLNRVLQLFDEMLHSGLSP, DMWSYNTLMSCYFKLGRHGEAFKILHEDIHLAGLVP, GIDTYNILLDALCKSGHTDNAIELFKHLKSR, ELMTYNILINGLCKSRRVGSVDWMMRELKKSGYTP, NAVTYTTMLKMYFKTKRIEKGLQLFLKMKKEGYTF, DGFANCAVVSALIKTGRAEEAYECMHELVRSGTRS, DIVSYNTLLNLYFKDGNLDAVDDLLEEIEMKGLKP, DDYTHTIIVNGLLNIGNTGGAEKHLACIGEMGMQP, SVVTCNCLIDGLCKAGHVDRAMRLFASMEVR, and DEFTYTSVVHNLCKDGRLVCASKLLLSCYNKGMKI.

Belongs to the PPR family. P subfamily.

This Arabidopsis thaliana (Mouse-ear cress) protein is Pentatricopeptide repeat-containing protein At5g46680.